A 217-amino-acid polypeptide reads, in one-letter code: Probable transaldolase (217 aa).

Lys-85 (schiff-base intermediate with substrate) is an active-site residue.

Belongs to the transaldolase family. Type 3B subfamily.

The protein localises to the cytoplasm. It carries out the reaction D-sedoheptulose 7-phosphate + D-glyceraldehyde 3-phosphate = D-erythrose 4-phosphate + beta-D-fructose 6-phosphate. It participates in carbohydrate degradation; pentose phosphate pathway; D-glyceraldehyde 3-phosphate and beta-D-fructose 6-phosphate from D-ribose 5-phosphate and D-xylulose 5-phosphate (non-oxidative stage): step 2/3. Transaldolase is important for the balance of metabolites in the pentose-phosphate pathway. This is Probable transaldolase from Brachyspira hyodysenteriae (strain ATCC 49526 / WA1).